The following is a 355-amino-acid chain: Uroporphyrinogen decarboxylase (355 aa).

Residues 27 to 31 (RQAGR), aspartate 78, tyrosine 155, serine 210, and histidine 328 contribute to the substrate site.

It belongs to the uroporphyrinogen decarboxylase family. Homodimer.

The protein localises to the cytoplasm. The catalysed reaction is uroporphyrinogen III + 4 H(+) = coproporphyrinogen III + 4 CO2. It functions in the pathway porphyrin-containing compound metabolism; protoporphyrin-IX biosynthesis; coproporphyrinogen-III from 5-aminolevulinate: step 4/4. Its function is as follows. Catalyzes the decarboxylation of four acetate groups of uroporphyrinogen-III to yield coproporphyrinogen-III. The chain is Uroporphyrinogen decarboxylase from Pseudomonas aeruginosa (strain LESB58).